Here is a 359-residue protein sequence, read N- to C-terminus: Aspartate carbamoyltransferase catalytic subunit (359 aa).

The carbamoyl phosphate site is built by R52 and T53. An L-aspartate-binding site is contributed by K81. The carbamoyl phosphate site is built by R102, H130, and Q133. R163 and R224 together coordinate L-aspartate. L264 and P265 together coordinate carbamoyl phosphate.

This sequence belongs to the aspartate/ornithine carbamoyltransferase superfamily. ATCase family. Heterododecamer (2C3:3R2) of six catalytic PyrB chains organized as two trimers (C3), and six regulatory PyrI chains organized as three dimers (R2).

It catalyses the reaction carbamoyl phosphate + L-aspartate = N-carbamoyl-L-aspartate + phosphate + H(+). It participates in pyrimidine metabolism; UMP biosynthesis via de novo pathway; (S)-dihydroorotate from bicarbonate: step 2/3. Catalyzes the condensation of carbamoyl phosphate and aspartate to form carbamoyl aspartate and inorganic phosphate, the committed step in the de novo pyrimidine nucleotide biosynthesis pathway. This chain is Aspartate carbamoyltransferase catalytic subunit, found in Brachyspira hyodysenteriae (strain ATCC 49526 / WA1).